We begin with the raw amino-acid sequence, 289 residues long: Bis(5'-nucleosyl)-tetraphosphatase, symmetrical (289 aa).

It belongs to the Ap4A hydrolase family.

It carries out the reaction P(1),P(4)-bis(5'-adenosyl) tetraphosphate + H2O = 2 ADP + 2 H(+). Its function is as follows. Hydrolyzes diadenosine 5',5'''-P1,P4-tetraphosphate to yield ADP. The sequence is that of Bis(5'-nucleosyl)-tetraphosphatase, symmetrical from Pseudomonas fluorescens (strain ATCC BAA-477 / NRRL B-23932 / Pf-5).